The primary structure comprises 312 residues: Glyoxylate/hydroxypyruvate reductase A (312 aa).

Arg227 is a catalytic residue. The active-site Proton donor is His275.

This sequence belongs to the D-isomer specific 2-hydroxyacid dehydrogenase family. GhrA subfamily.

It localises to the cytoplasm. The catalysed reaction is glycolate + NADP(+) = glyoxylate + NADPH + H(+). The enzyme catalyses (R)-glycerate + NAD(+) = 3-hydroxypyruvate + NADH + H(+). It catalyses the reaction (R)-glycerate + NADP(+) = 3-hydroxypyruvate + NADPH + H(+). Its function is as follows. Catalyzes the NADPH-dependent reduction of glyoxylate and hydroxypyruvate into glycolate and glycerate, respectively. This Escherichia coli O7:K1 (strain IAI39 / ExPEC) protein is Glyoxylate/hydroxypyruvate reductase A.